The chain runs to 137 residues: MERTFIMLKPDAVKNKHIGDILQRIEKEGFKILGMKFLKLSLEDAKQFYAVHAARPFYNDLCTYMASGPIVACALERDNAVAHWRDVIGATDPKEAKAGTIRALFAESKEANAVHGSDSVANALQEIAFFFKGYELN.

6 residues coordinate ATP: Lys9, Phe57, Arg85, Thr91, Arg102, and Asn112. Residue His115 is the Pros-phosphohistidine intermediate of the active site.

It belongs to the NDK family. Homotetramer. Requires Mg(2+) as cofactor.

It localises to the cytoplasm. The enzyme catalyses a 2'-deoxyribonucleoside 5'-diphosphate + ATP = a 2'-deoxyribonucleoside 5'-triphosphate + ADP. It catalyses the reaction a ribonucleoside 5'-diphosphate + ATP = a ribonucleoside 5'-triphosphate + ADP. In terms of biological role, major role in the synthesis of nucleoside triphosphates other than ATP. The ATP gamma phosphate is transferred to the NDP beta phosphate via a ping-pong mechanism, using a phosphorylated active-site intermediate. The sequence is that of Nucleoside diphosphate kinase from Leptospira biflexa serovar Patoc (strain Patoc 1 / ATCC 23582 / Paris).